Here is a 951-residue protein sequence, read N- to C-terminus: PE-PGRS family protein PE_PGRS3 (951 aa).

One can recognise a PE domain in the interval 4–94; the sequence is VIAAPEVIAA…GAYAAAEAAA (91 aa). Residues 887 to 919 are compositionally biased toward basic residues; that stretch reads CRRQRRADRQRRQRRQRRQSRGHARCRRHRRAA. Positions 887–951 are disordered; sequence CRRQRRADRQ…GISCSPQMMP (65 aa).

The protein belongs to the mycobacterial PE family. PGRS subfamily.

Its subcellular location is the cell outer membrane. It is found in the secreted. The protein localises to the cell wall. It localises to the cell surface. The arginine-rich C-terminal region protrudes from the mycobacterial membrane and mediates M.tuberculosis entry into host epithelial cells. May serve as a bridge between mycobacteria and host cells by interacting with specific host phospholipids and extracting them from host cells, for their direct integration or as a source of phosphate, during phases of TB pathogenesis when M.tuberculosis is short of phosphate supply. In Mycobacterium tuberculosis (strain CDC 1551 / Oshkosh), this protein is PE-PGRS family protein PE_PGRS3 (PE_PGRS3).